The primary structure comprises 520 residues: Protein nucleotidyltransferase YdiU (520 aa).

Residues Gly-108, Gly-110, Arg-111, Lys-130, Asp-142, Gly-143, Arg-193, and Arg-200 each coordinate ATP. Asp-269 serves as the catalytic Proton acceptor. Positions 270 and 279 each coordinate Mg(2+). Asp-279 serves as a coordination point for ATP.

Belongs to the SELO family. Mg(2+) serves as cofactor. Mn(2+) is required as a cofactor.

The catalysed reaction is L-seryl-[protein] + ATP = 3-O-(5'-adenylyl)-L-seryl-[protein] + diphosphate. The enzyme catalyses L-threonyl-[protein] + ATP = 3-O-(5'-adenylyl)-L-threonyl-[protein] + diphosphate. It carries out the reaction L-tyrosyl-[protein] + ATP = O-(5'-adenylyl)-L-tyrosyl-[protein] + diphosphate. It catalyses the reaction L-histidyl-[protein] + UTP = N(tele)-(5'-uridylyl)-L-histidyl-[protein] + diphosphate. The catalysed reaction is L-seryl-[protein] + UTP = O-(5'-uridylyl)-L-seryl-[protein] + diphosphate. The enzyme catalyses L-tyrosyl-[protein] + UTP = O-(5'-uridylyl)-L-tyrosyl-[protein] + diphosphate. Functionally, nucleotidyltransferase involved in the post-translational modification of proteins. It can catalyze the addition of adenosine monophosphate (AMP) or uridine monophosphate (UMP) to a protein, resulting in modifications known as AMPylation and UMPylation. This is Protein nucleotidyltransferase YdiU from Cupriavidus pinatubonensis (strain JMP 134 / LMG 1197) (Cupriavidus necator (strain JMP 134)).